Here is a 292-residue protein sequence, read N- to C-terminus: Calponin-1 (292 aa).

Positions 28-131 constitute a Calponin-homology (CH) domain; the sequence is PQTERQLRVW…STLIALASQA (104 aa). Calponin-like repeat units lie at residues 164 to 189, 204 to 229, and 243 to 268; these read IGLQ…RHLY, ISLQ…RQIF, and IGLQ…RQVY. Position 170 is a phosphothreonine; by ROCK2 (T170). A Phosphoserine; by PKC, CaMK2 and ROCK2 modification is found at S175. Phosphothreonine; by ROCK2 occurs at positions 180 and 184. Residue T184 is modified to Phosphothreonine; by PKC and CaMK2. Positions 185 to 193 are calmodulin-binding; sequence RRHLYDPKL. Phosphothreonine; by ROCK2 is present on T259.

The protein belongs to the calponin family. In terms of processing, phosphorylation by PKC or CaM kinase II reduces the binding of calponin to F-actin and tropomyosin. In terms of tissue distribution, smooth muscle, and tissues containing significant amounts of smooth muscle.

Functionally, thin filament-associated protein that is implicated in the regulation and modulation of smooth muscle contraction. It is capable of binding to actin, calmodulin and tropomyosin. The interaction of calponin with actin inhibits the actomyosin Mg-ATPase activity. In Gallus gallus (Chicken), this protein is Calponin-1 (CNN1).